A 507-amino-acid polypeptide reads, in one-letter code: Efflux pump ustT (507 aa).

A run of 11 helical transmembrane segments spans residues 59-79, 146-166, 180-200, 216-236, 240-260, 316-336, 359-379, 398-418, 421-441, 449-469, and 481-501; these read IAVVASLTFLITDIAGQIIVA, LLIAMVGCLLSDIWVGVVTWF, IWQLIGGGGASISSMAFAMIA, HAAVLVAELVSVPAGAALANF, IPVFGAAIFMVLGILFAYVVV, VLLIMASFFVCQLGRMISGIT, AGVNLFVLAAIIPALSYILVK, VCLIIGSFVMFLAASPGTLVF, TVFALGFAFSVTARSFLTGMV, VFTGVTTMLYGGLVIGSPMLA, and IWVGLPFLLAAVLFTLALGAI.

Belongs to the major facilitator superfamily.

The protein resides in the cell membrane. It participates in mycotoxin biosynthesis. In terms of biological role, efflux pump; part of the gene cluster that mediates the biosynthesis of the secondary metabolite ustiloxin B, an antimitotic tetrapeptide. Probably involved in self-resistance through the export of ustiloxin B. The polypeptide is Efflux pump ustT (Aspergillus flavus (strain ATCC 200026 / FGSC A1120 / IAM 13836 / NRRL 3357 / JCM 12722 / SRRC 167)).